The following is a 267-amino-acid chain: Glutamate racemase (267 aa).

Residues 13–14 (DS) and 45–46 (YG) each bind substrate. The active-site Proton donor/acceptor is the Cys-77. Position 78-79 (78-79 (NT)) interacts with substrate. Cys-192 serves as the catalytic Proton donor/acceptor. A substrate-binding site is contributed by 193-194 (TH).

The protein belongs to the aspartate/glutamate racemases family.

The catalysed reaction is L-glutamate = D-glutamate. It functions in the pathway cell wall biogenesis; peptidoglycan biosynthesis. Functionally, provides the (R)-glutamate required for cell wall biosynthesis. The polypeptide is Glutamate racemase (Sinorhizobium fredii (strain NBRC 101917 / NGR234)).